The sequence spans 1075 residues: Ataxin-2-like protein (1075 aa).

N-acetylmethionine is present on M1. A compositionally biased stretch (low complexity) spans 1–12 (MLKPQPLQQPSQ). The disordered stretch occupies residues 1-115 (MLKPQPLQQP…KGPPQSPVFE (115 aa)). The segment at 98 to 121 (SARGQSTGKGPPQSPVFEGVYNNS) is interaction with MPL. Phosphoserine occurs at positions 103 and 111. Phosphotyrosine is present on Y118. Positions 122-199 (RMLHFLTAVV…VMLVHFRNVD (78 aa)) constitute a Sm domain. An N6-acetyllysine modification is found at K207. S238 carries the post-translational modification Phosphoserine. Y264 is modified (phosphotyrosine). S306 is subject to Phosphoserine. A Phosphotyrosine modification is found at Y309. Basic and acidic residues predominate over residues 316–328 (ENDDGRTEEEKHS). Disordered stretches follow at residues 316-521 (ENDD…LEPQ), 551-697 (QFKL…SIPV), 733-770 (VSNS…MMQA), 820-849 (SNPR…EQPT), 865-940 (ATQL…SSFP), and 1022-1045 (PYIG…ADDR). Residues 330-342 (VQRQGSGRESPSL) show a composition bias toward polar residues. Residues S335 and S339 each carry the phosphoserine modification. K348 is covalently cross-linked (Glycyl lysine isopeptide (Lys-Gly) (interchain with G-Cter in SUMO2)). A Phosphotyrosine modification is found at Y349. Asymmetric dimethylarginine is present on R361. Positions 363 to 380 (GVRCSSSRGGRPGLSSLP) are enriched in low complexity. 2 positions are modified to phosphoserine: S391 and S409. Positions 421–433 (TLSSPSNRPSGET) are enriched in polar residues. S449 is modified (phosphoserine). 2 stretches are compositionally biased toward low complexity: residues 450–462 (PKSA…SASC) and 471–485 (VPTS…SSVS). A phosphoserine mark is found at S493 and S496. Basic and acidic residues predominate over residues 505–516 (DVKELSTKEPGR). Phosphoserine occurs at positions 557, 558, 559, and 563. Residues 571–584 (ILKEEPKGKEKEVD) show a composition bias toward basic and acidic residues. Residue S594 is modified to Phosphoserine. T632 carries the post-translational modification Phosphothreonine. Residues S634, S674, S680, and S684 each carry the phosphoserine modification. 2 stretches are compositionally biased toward low complexity: residues 678-694 (STST…STPS) and 761-770 (PASAPPMMQA). The segment covering 874–898 (QPATTPTGSQPQSQHAAPSPVQHQA) has biased composition (polar residues). Low complexity-rich tracts occupy residues 931-940 (SAQSPQSSFP) and 1025-1037 (GHPQ…QAPG).

This sequence belongs to the ataxin-2 family. Interacts with MPL/TPOR and EPOR and dissociates after ligand stimulation. Interacts with DDX6, G3BP1, and ATXN2. Interacts with PRMT1. Interacts with CIC and ATXN1. Thrombopoietin triggers the phosphorylation on tyrosine residues in a way that is dependent on MPL C-terminal domain. In terms of processing, asymmetrically dimethylated. Probably methylated by PRMT1. In terms of tissue distribution, expressed at high levels in thymus, lymph node, spleen, fetal kidney and adult testis. Constitutively associated with MPL and EPOR in hematopoietic cells.

Its subcellular location is the membrane. The protein localises to the cytoplasm. It is found in the nucleus speckle. The protein resides in the cytoplasmic granule. Involved in the regulation of stress granule and P-body formation. This is Ataxin-2-like protein (ATXN2L) from Homo sapiens (Human).